Consider the following 477-residue polypeptide: Adenylyl cyclase-associated protein 2 (477 aa).

An N-acetylalanine modification is found at alanine 2. 2 disordered regions span residues 224 to 262 (SILSSGPGLPPPPPPPPPPGPPPPFENEGGKEEPSPSRS) and 274 to 324 (ITKG…HAPV). Positions 231–248 (GLPPPPPPPPPPGPPPPF) are enriched in pro residues. Positions 300–318 (RSPTKTRTPSPTSSKSNSP) are enriched in low complexity. Phosphoserine occurs at positions 301 and 309. Residues 318–455 (PQKHAPVLEL…QGDDYREFPI (138 aa)) enclose the C-CAP/cofactor C-like domain.

It belongs to the CAP family. As to expression, found at relatively high levels in testes, at moderate levels in brain, heart and skeletal muscle, at lower levels in lung, skin, kidney and small intestine, and is undetectable in liver or spleen.

The protein resides in the cell membrane. Its function is as follows. Involved in the regulation of actin polymerization. The chain is Adenylyl cyclase-associated protein 2 (Cap2) from Rattus norvegicus (Rat).